Here is a 193-residue protein sequence, read N- to C-terminus: Large ribosomal subunit protein bL25 (193 aa).

Belongs to the bacterial ribosomal protein bL25 family. CTC subfamily. As to quaternary structure, part of the 50S ribosomal subunit; part of the 5S rRNA/L5/L18/L25 subcomplex. Contacts the 5S rRNA. Binds to the 5S rRNA independently of L5 and L18.

Functionally, this is one of the proteins that binds to the 5S RNA in the ribosome where it forms part of the central protuberance. This Oleidesulfovibrio alaskensis (strain ATCC BAA-1058 / DSM 17464 / G20) (Desulfovibrio alaskensis) protein is Large ribosomal subunit protein bL25.